The sequence spans 566 residues: Osteoclast stimulatory transmembrane protein (566 aa).

Residues 1–51 (MPGHPGAAEQLVKTGWRSWHLGFWKALAPLQAAWDAFSQPVPASCGQLLTQ) lie on the Cytoplasmic side of the membrane. A helical transmembrane segment spans residues 52 to 72 (LLLCASLAAAAAGLVYHWLAS). Residues 73 to 81 (LLLYPPGPS) are Extracellular-facing. A helical transmembrane segment spans residues 82–102 (AMVATVCGLLVFLSLGLVPPV). Residues 103–128 (RCLFALSVPTLGMEQGRRLLLSYSTA) lie on the Cytoplasmic side of the membrane. The helical transmembrane segment at 129–149 (TLAIAVVPNVLANVGAAGQVL) threads the bilayer. The Extracellular portion of the chain corresponds to 150–227 (RCVTEGSLES…ARAAALGTQR (78 aa)). The chain crosses the membrane as a helical span at residues 228 to 248 (VVTGLFMLGLLVESAWYLHCY). Residues 249–304 (LTDLRFDNIYATQQLTQRLAQAQATHLLAPPPTWLLQAAQLRLSQEELLSCLLRLG) are Cytoplasmic-facing. Residues 305–325 (LLALLLVATAVAVATDHVAFL) form a helical membrane-spanning segment. The Extracellular segment spans residues 326–398 (LAQATVDWAQ…CPLLPARRPR (73 aa)). The helical transmembrane segment at 399 to 419 (AAAPLAAGALQLLAGSTVLLE) threads the bilayer. Over 420–566 (AYARRLRHAI…EGNTGHDRPG (147 aa)) the chain is Cytoplasmic.

It localises to the membrane. In terms of biological role, probable cell surface receptor that plays a role in cellular fusion and cell differentiation. Cooperates with DCSTAMP in modulating cell-cell fusion in both osteoclasts and foreign body giant cells (FBGCs). Involved in osteoclast bone resorption. Promotes osteoclast differentiation and may play a role in the multinucleated osteoclast maturation. This chain is Osteoclast stimulatory transmembrane protein (OCSTAMP), found in Homo sapiens (Human).